Consider the following 171-residue polypeptide: Secreted protein CSS3 (171 aa).

The first 20 residues, 1–20 (MVPLFGLFCIFSQLYSLCSA), serve as a signal peptide directing secretion. 3 N-linked (GlcNAc...) asparagine glycosylation sites follow: N37, N139, and N159.

Its subcellular location is the cytoplasm. The protein resides in the secreted. The protein is Secreted protein CSS3 of Saccharomyces cerevisiae (strain ATCC 204508 / S288c) (Baker's yeast).